Consider the following 339-residue polypeptide: Pyrimidine monooxygenase RutA (339 aa).

Residues 26-27 (IK), asparagine 92, glutamate 101, 117-118 (RY), and serine 167 contribute to the FMN site.

The protein belongs to the NtaA/SnaA/DszA monooxygenase family. RutA subfamily.

It catalyses the reaction uracil + FMNH2 + NADH + O2 = (Z)-3-ureidoacrylate + FMN + NAD(+) + H2O + H(+). The catalysed reaction is thymine + FMNH2 + NADH + O2 = (Z)-2-methylureidoacrylate + FMN + NAD(+) + H2O + H(+). Catalyzes the pyrimidine ring opening between N-3 and C-4 by an unusual flavin hydroperoxide-catalyzed mechanism, adding oxygen atoms in the process to yield ureidoacrylate peracid, that immediately reacts with FMN forming ureidoacrylate and FMN-N(5)-oxide. The FMN-N(5)-oxide reacts spontaneously with NADH to produce FMN. Requires the flavin reductase RutF to regenerate FMN in vivo. This is Pyrimidine monooxygenase RutA from Cronobacter sakazakii (strain ATCC BAA-894) (Enterobacter sakazakii).